The chain runs to 719 residues: Endonuclease MutS2 (719 aa).

Residue 273–280 coordinates ATP; it reads GPNTGGKT. Residues 644–719 form the Smr domain; that stretch reads LDLRGYRYED…GFGVTVATLK (76 aa).

It belongs to the DNA mismatch repair MutS family. MutS2 subfamily. In terms of assembly, homodimer. Binds to stalled ribosomes, contacting rRNA.

Functionally, endonuclease that is involved in the suppression of homologous recombination and thus may have a key role in the control of bacterial genetic diversity. Its function is as follows. Acts as a ribosome collision sensor, splitting the ribosome into its 2 subunits. Detects stalled/collided 70S ribosomes which it binds and splits by an ATP-hydrolysis driven conformational change. Acts upstream of the ribosome quality control system (RQC), a ribosome-associated complex that mediates the extraction of incompletely synthesized nascent chains from stalled ribosomes and their subsequent degradation. Probably generates substrates for RQC. In Staphylococcus aureus, this protein is Endonuclease MutS2.